The primary structure comprises 277 residues: Putative phosphoenolpyruvate synthase regulatory protein (277 aa).

157-164 serves as a coordination point for ADP; that stretch reads GVSRSGKT.

Belongs to the pyruvate, phosphate/water dikinase regulatory protein family. PSRP subfamily.

The enzyme catalyses [pyruvate, water dikinase] + ADP = [pyruvate, water dikinase]-phosphate + AMP + H(+). It carries out the reaction [pyruvate, water dikinase]-phosphate + phosphate + H(+) = [pyruvate, water dikinase] + diphosphate. Its function is as follows. Bifunctional serine/threonine kinase and phosphorylase involved in the regulation of the phosphoenolpyruvate synthase (PEPS) by catalyzing its phosphorylation/dephosphorylation. The chain is Putative phosphoenolpyruvate synthase regulatory protein from Azoarcus sp. (strain BH72).